The following is a 133-amino-acid chain: Ribonuclease VapC10 (133 aa).

Residues 2 to 119 (ILVDSDVLIA…NVWHFPMFEQ (118 aa)) form the PINc domain. Mg(2+) contacts are provided by Asp-5 and Asp-92.

This sequence belongs to the PINc/VapC protein family. It depends on Mg(2+) as a cofactor.

Toxic component of a type II toxin-antitoxin (TA) system. An RNase. The cognate antitoxin is VapB10. This Mycobacterium tuberculosis (strain CDC 1551 / Oshkosh) protein is Ribonuclease VapC10.